The primary structure comprises 329 residues: 4-hydroxythreonine-4-phosphate dehydrogenase (329 aa).

His136 and Thr137 together coordinate substrate. Residues His166, His211, and His266 each contribute to the a divalent metal cation site. 3 residues coordinate substrate: Lys274, Asn283, and Arg292.

The protein belongs to the PdxA family. In terms of assembly, homodimer. Requires Zn(2+) as cofactor. Mg(2+) serves as cofactor. It depends on Co(2+) as a cofactor.

The protein localises to the cytoplasm. The catalysed reaction is 4-(phosphooxy)-L-threonine + NAD(+) = 3-amino-2-oxopropyl phosphate + CO2 + NADH. The protein operates within cofactor biosynthesis; pyridoxine 5'-phosphate biosynthesis; pyridoxine 5'-phosphate from D-erythrose 4-phosphate: step 4/5. In terms of biological role, catalyzes the NAD(P)-dependent oxidation of 4-(phosphooxy)-L-threonine (HTP) into 2-amino-3-oxo-4-(phosphooxy)butyric acid which spontaneously decarboxylates to form 3-amino-2-oxopropyl phosphate (AHAP). This chain is 4-hydroxythreonine-4-phosphate dehydrogenase, found in Shigella sonnei (strain Ss046).